Reading from the N-terminus, the 403-residue chain is Chromatin structure-remodeling complex subunit rsc58 (403 aa).

The segment covering Ser376–Asn389 has biased composition (low complexity). The interval Ser376–Arg403 is disordered. The residue at position 384 (Ser384) is a Phosphoserine.

In terms of assembly, component of the RSC complex composed of at least arp9, arp42, rsc1, rsc4, rsc7, rsc9, rsc58, sfh1, snf21, ssr1, ssr2, ssr3 and ssr4. The complex interacts with histone and histone variant components of centromeric chromatin.

It is found in the cytoplasm. The protein resides in the nucleus. Its function is as follows. Component of the chromatin structure remodeling complex (RSC), which is involved in transcription regulation and nucleosome positioning. Controls particularly membrane and organelle development genes. The chain is Chromatin structure-remodeling complex subunit rsc58 (rsc58) from Schizosaccharomyces pombe (strain 972 / ATCC 24843) (Fission yeast).